We begin with the raw amino-acid sequence, 365 residues long: DNA replication and repair protein RecF (365 aa).

An ATP-binding site is contributed by 30 to 37 (GRNAQGKT).

It belongs to the RecF family.

The protein localises to the cytoplasm. In terms of biological role, the RecF protein is involved in DNA metabolism; it is required for DNA replication and normal SOS inducibility. RecF binds preferentially to single-stranded, linear DNA. It also seems to bind ATP. The polypeptide is DNA replication and repair protein RecF (Streptococcus pneumoniae (strain CGSP14)).